A 446-amino-acid chain; its full sequence is Ribosome biogenesis protein WDR12 homolog (446 aa).

The interval 21 to 105 (VQITFFSKDK…ETILKIECII (85 aa)) is ubiquitin-like (UBL) domain. WD repeat units lie at residues 171-211 (KCSG…LVEK) and 216-255 (GHER…EATI). Residues 256-275 (YEKEEEESSAKKKRKKDTRT) form a disordered region. WD repeat units follow at residues 284–324 (GHRD…EVSR), 326–365 (KGPK…GAMV), 371–412 (GHQN…SSLF), and 416–446 (GHED…FETS).

Belongs to the WD repeat WDR12/YTM1 family.

It localises to the nucleus. The protein resides in the nucleolus. It is found in the nucleoplasm. In terms of biological role, required for maturation of ribosomal RNAs and formation of the large ribosomal subunit. This chain is Ribosome biogenesis protein WDR12 homolog, found in Caenorhabditis briggsae.